Here is a 421-residue protein sequence, read N- to C-terminus: Protein MID1-COMPLEMENTING ACTIVITY 1 (421 aa).

Residues 188 to 218 are a coiled coil; that stretch reads RFCEALKTENEKLQIELQRSQEHYDVAQCEV. Positions 233–288 are disordered; it reads EPDSEKELTKKASKKSERSSSMKTEYSYDEDSPKKSSTRAASRSTSNVSSGHDLLS. The span at 235 to 252 shows a compositional bias: basic and acidic residues; the sequence is DSEKELTKKASKKSERSS. A compositionally biased stretch (low complexity) spans 270-282; that stretch reads TRAASRSTSNVSS. The helical transmembrane segment at 346-362 threads the bilayer; it reads LMAYSLILSCCCYTCCV.

In terms of tissue distribution, expressed in roots, leaves, stems, flowers and siliques. Expressed in vascular tissues of cotyledons, leaves and primary root, in the promeristem and adjacent elongation zone of the primary root and in the shoot apical meristem. Detected in the stele and endodermis, but not in the cortex, epidermis or root cap, including the columella. Not expressed in root hairs or in mesophyll cells of leaves and cotyledons.

Its subcellular location is the cell membrane. With respect to regulation, inhibited by GdCl(3), but not by verapamil. Its function is as follows. Calcium-permeable stretch-activated channel component. Involved in mechano-stimulated calcium uptake mechanism and in mechanosensing in the primary root. The protein is Protein MID1-COMPLEMENTING ACTIVITY 1 (MCA1) of Arabidopsis thaliana (Mouse-ear cress).